A 270-amino-acid polypeptide reads, in one-letter code: Carboxy-S-adenosyl-L-methionine synthase (270 aa).

S-adenosyl-L-methionine is bound by residues tyrosine 65, 90 to 92 (GCS), 143 to 144 (DI), asparagine 158, and arginine 225.

This sequence belongs to the class I-like SAM-binding methyltransferase superfamily. Cx-SAM synthase family. In terms of assembly, homodimer.

It catalyses the reaction prephenate + S-adenosyl-L-methionine = carboxy-S-adenosyl-L-methionine + 3-phenylpyruvate + H2O. Catalyzes the conversion of S-adenosyl-L-methionine (SAM) to carboxy-S-adenosyl-L-methionine (Cx-SAM). This is Carboxy-S-adenosyl-L-methionine synthase from Chromohalobacter salexigens (strain ATCC BAA-138 / DSM 3043 / CIP 106854 / NCIMB 13768 / 1H11).